The sequence spans 417 residues: UPF0597 protein Cphy_1256 (417 aa).

Belongs to the UPF0597 family.

The sequence is that of UPF0597 protein Cphy_1256 from Lachnoclostridium phytofermentans (strain ATCC 700394 / DSM 18823 / ISDg) (Clostridium phytofermentans).